We begin with the raw amino-acid sequence, 404 residues long: Intracellular hyaluronan-binding protein 4.L (404 aa).

Disordered stretches follow at residues 1–21 (MRLD…MQDN), 51–288 (LTRR…QEMS), and 359–379 (LTRP…REEA). Residues 8–19 (ETPSSPVNTEMQ) are compositionally biased toward polar residues. Composition is skewed to basic and acidic residues over residues 71–81 (GKKESQKDRKA), 145–159 (KVDR…REVR), and 165–184 (RSNE…DKQM). The segment covering 188–200 (GGRGGMRGRGRGG) has biased composition (gly residues). Composition is skewed to basic and acidic residues over residues 205–233 (TEND…DKRG) and 270–281 (EEHAKVPEEKNE).

It belongs to the SERBP1-HABP4 family. In terms of assembly, associates with ribosomes; promoting ribosome stabilization. Interacts with eef2/eEF2; promoting ribosome stabilization.

The protein resides in the nucleus. Its subcellular location is the cytoplasm. The protein localises to the stress granule. It is found in the nucleolus. It localises to the nucleus speckle. The protein resides in the cajal body. Ribosome-binding protein that promotes ribosome hibernation, a process during which ribosomes are stabilized in an inactive state and preserved from proteasomal degradation. Acts via its association with eef2/eEF2 factor at the A-site of the ribosome, promoting ribosome stabilization in an inactive state compatible with storage. Plays a key role in ribosome hibernation in the mature egg by promoting ribosome stabilization. Ribosomes, which are produced in large quantities during oogenesis, are stored and translationally repressed in the egg and early embryo. The polypeptide is Intracellular hyaluronan-binding protein 4.L (Xenopus laevis (African clawed frog)).